A 305-amino-acid polypeptide reads, in one-letter code: Phosphoinositol dihydroceramide synthase (305 aa).

The N-terminal stretch at 1–23 is a signal peptide; the sequence is MPSKKETLTVIVIMALFLLLTAA. Cysteine 24 carries N-palmitoyl cysteine lipidation. Cysteine 24 carries S-diacylglycerol cysteine lipidation. The next 6 membrane-spanning stretches (helical) occupy residues 41–61, 117–137, 149–169, 216–236, 241–261, and 266–286; these read LFFA…FAIF, VFAG…GLCL, FALV…IHPA, FAAV…YAII, WYVI…AIYS, and IIDV…FEYG.

The protein resides in the membrane. It catalyses the reaction N-(2-hydroxy-fatty acyl)-dihydroceramide + a 1,2-diacyl-sn-glycero-3-phospho-(1D-myo-inositol) = inositol-1-phospho-N-(2-hydroxy-fatty acyl)-dihydroceramide + a 1,2-diacyl-sn-glycerol. Its function is as follows. Catalyzes the addition of a phosphorylinositol group onto dihydroceramide to form phosphoinositol dihydroceramide (PI-DHC), an essential step in sphingolipid biosynthesis. This chain is Phosphoinositol dihydroceramide synthase, found in Bacteroides thetaiotaomicron (strain ATCC 29148 / DSM 2079 / JCM 5827 / CCUG 10774 / NCTC 10582 / VPI-5482 / E50).